We begin with the raw amino-acid sequence, 569 residues long: Proline--tRNA ligase (569 aa).

This sequence belongs to the class-II aminoacyl-tRNA synthetase family. ProS type 1 subfamily. In terms of assembly, homodimer.

It localises to the cytoplasm. It carries out the reaction tRNA(Pro) + L-proline + ATP = L-prolyl-tRNA(Pro) + AMP + diphosphate. Functionally, catalyzes the attachment of proline to tRNA(Pro) in a two-step reaction: proline is first activated by ATP to form Pro-AMP and then transferred to the acceptor end of tRNA(Pro). As ProRS can inadvertently accommodate and process non-cognate amino acids such as alanine and cysteine, to avoid such errors it has two additional distinct editing activities against alanine. One activity is designated as 'pretransfer' editing and involves the tRNA(Pro)-independent hydrolysis of activated Ala-AMP. The other activity is designated 'posttransfer' editing and involves deacylation of mischarged Ala-tRNA(Pro). The misacylated Cys-tRNA(Pro) is not edited by ProRS. This is Proline--tRNA ligase from Lactiplantibacillus plantarum (strain ATCC BAA-793 / NCIMB 8826 / WCFS1) (Lactobacillus plantarum).